Reading from the N-terminus, the 809-residue chain is Cyclic nucleotide-gated channel beta-3 (809 aa).

2 disordered regions span residues 1-121 (MFKS…PPAA) and 153-178 (GDLS…ESDD). The Cytoplasmic segment spans residues 1-218 (MFKSLTKVNK…SIDSYTDRLY (218 aa)). Positions 22-31 (QSSRRNEEGS) are enriched in basic and acidic residues. Polar residues predominate over residues 32–43 (HPSNQSQQTTAQ). Residues 44–53 (EENKGEEKSL) are compositionally biased toward basic and acidic residues. Positions 55-88 (TKSTPVTSEEPHTNIQDKLSKKNSSGDLTTNPDP) are enriched in polar residues. Residues 219-242 (LLWLLLVTLAYNWNCCFIPLRLVF) traverse the membrane as a helical segment. Topologically, residues 243–249 (PYQTADN) are extracellular. Residues 250–270 (IHYWLIADIICDIIYLYDMLF) form a helical membrane-spanning segment. The Cytoplasmic portion of the chain corresponds to 271-299 (IQPRLQFVRGGDIIVDSNELRKHYRTSTK). The helical transmembrane segment at 300–317 (FQLDVASIIPFDICYLFF) threads the bilayer. Residues 318-320 (GFN) are Extracellular-facing. The helical transmembrane segment at 321 to 335 (PMFRANRMLKYTSFF) threads the bilayer. Residues 336-348 (EFNHHLESIMDKA) are Cytoplasmic-facing. The ion conduction pathway stretch occupies residues 348 to 447 (AYIYRVIRTT…IGQMRDVIGA (100 aa)). A helical transmembrane segment spans residues 349 to 371 (YIYRVIRTTGYLLFILHINACVY). Residues 372–393 (YWASNYEGIGTTRWVYDGEGNE) are Extracellular-facing. 2 helical membrane-spanning segments follow: residues 394-420 (YLRC…LFEI) and 421-445 (VFQL…RDVI). The selectivity filter stretch occupies residues 407 to 410 (TIGG). At 446-809 (GAATANQNYF…TIEVKEKAKQ (364 aa)) the chain is on the cytoplasmic side. The tract at residues 450–526 (ANQNYFRACM…SIISKVDLFK (77 aa)) is C-linker. The cyclic nucleotide-binding domain stretch occupies residues 530–646 (TQMIYDMLLR…ILMKKARVLL (117 aa)). Residues Gly-591, Glu-592, Arg-604, and Thr-605 each coordinate 3',5'-cyclic GMP. The interval 698-776 (QAAQKKENSE…PHSVRRTVLP (79 aa)) is disordered. A compositionally biased stretch (basic and acidic residues) spans 716–755 (NEDKQKENEDKQKENEDKGKENEDKDKGREPEEKPLDRPE).

It belongs to the cyclic nucleotide-gated cation channel (TC 1.A.1.5) family. CNGB3 subfamily. As to quaternary structure, forms heterotetrameric channels composed of CNGA3 and CNGB3 subunits with 3:1 stoichiometry. Expressed specifically in the retina.

It localises to the cell membrane. The enzyme catalyses Ca(2+)(in) = Ca(2+)(out). It catalyses the reaction Na(+)(in) = Na(+)(out). The catalysed reaction is K(+)(in) = K(+)(out). It carries out the reaction NH4(+)(in) = NH4(+)(out). The enzyme catalyses Rb(+)(in) = Rb(+)(out). It catalyses the reaction Li(+)(in) = Li(+)(out). The catalysed reaction is Cs(+)(in) = Cs(+)(out). Its function is as follows. Pore-forming subunit of the cone cyclic nucleotide-gated channel. Mediates cone photoresponses at bright light converting transient changes in intracellular cGMP levels into electrical signals. In the dark, cGMP levels are high and keep the channel open enabling a steady inward current carried by Na(+) and Ca(2+) ions that leads to membrane depolarization and neurotransmitter release from synaptic terminals. Upon photon absorption cGMP levels decline leading to channel closure and membrane hyperpolarization that ultimately slows neurotransmitter release and signals the presence of light, the end point of the phototransduction cascade. Conducts cGMP- and cAMP-gated ion currents, with permeability for monovalent and divalent cations. The polypeptide is Cyclic nucleotide-gated channel beta-3 (Homo sapiens (Human)).